Reading from the N-terminus, the 1902-residue chain is PII-type proteinase (1902 aa).

The first 33 residues, 1–33 (MQRKKKGLSILLAGTVALGALAVLPVGEIQAKA), serve as a signal peptide directing secretion. A propeptide spanning residues 34 to 187 (AISQQTKVSS…VTLAKVYYPT (154 aa)) is cleaved from the precursor. In terms of domain architecture, Peptidase S8 spans 191 to 697 (ANSMANVQAV…AGLVDVKAAI (507 aa)). Active-site charge relay system residues include Asp-217, His-281, and Ser-620. The segment covering 1793–1805 (KTAGKGDDTTGTS) has biased composition (low complexity). The interval 1793–1872 (KTAGKGDDTT…GKGALPKTAE (80 aa)) is disordered. The short motif at 1867-1871 (LPKTA) is the LPXTG sorting signal element. Thr-1870 carries the post-translational modification Pentaglycyl murein peptidoglycan amidated threonine. The propeptide at 1871 to 1902 (AETTERPAFGFLGVIVVSLMGVLGLKRKQREE) is removed by sortase.

It belongs to the peptidase S8 family.

The protein localises to the secreted. It is found in the cell wall. The enzyme catalyses Endopeptidase activity with very broad specificity, although some subsite preference have been noted, e.g. large hydrophobic residues in the P1 and P4 positions, and Pro in the P2 position. Best known for its action on caseins, although it has been shown to hydrolyze hemoglobin and oxidized insulin B-chain.. Its function is as follows. Protease which breaks down milk proteins during the growth of the bacteria on milk. This chain is PII-type proteinase (prtP), found in Lacticaseibacillus paracasei (Lactobacillus paracasei).